A 1217-amino-acid polypeptide reads, in one-letter code: ATP-dependent helicase/nuclease subunit A (1217 aa).

The UvrD-like helicase ATP-binding domain maps to 10 to 475; the sequence is VIWTDAQWQS…IDLSQNFRSR (466 aa). 31–38 serves as a coordination point for ATP; the sequence is AAAGSGKT. Residues 476-786 enclose the UvrD-like helicase C-terminal domain; it reads KEVLSTTNYI…RMMTIHSSKG (311 aa).

It belongs to the helicase family. AddA subfamily. As to quaternary structure, heterodimer of AddA and AddB/RexB. Requires Mg(2+) as cofactor.

It carries out the reaction Couples ATP hydrolysis with the unwinding of duplex DNA by translocating in the 3'-5' direction.. It catalyses the reaction ATP + H2O = ADP + phosphate + H(+). Functionally, the heterodimer acts as both an ATP-dependent DNA helicase and an ATP-dependent, dual-direction single-stranded exonuclease. Recognizes the chi site generating a DNA molecule suitable for the initiation of homologous recombination. The AddA nuclease domain is required for chi fragment generation; this subunit has the helicase and 3' -&gt; 5' nuclease activities. This is ATP-dependent helicase/nuclease subunit A from Staphylococcus aureus (strain MW2).